Reading from the N-terminus, the 334-residue chain is Ornithine carbamoyltransferase (334 aa).

Carbamoyl phosphate is bound by residues 57–60 (STRT), Gln84, Arg108, and 135–138 (HPTQ). L-ornithine is bound by residues Asn168, Asp233, and 237-238 (SM). Carbamoyl phosphate is bound by residues 275-276 (CL) and Arg320.

Belongs to the aspartate/ornithine carbamoyltransferase superfamily. OTCase family.

The protein localises to the cytoplasm. It carries out the reaction carbamoyl phosphate + L-ornithine = L-citrulline + phosphate + H(+). The protein operates within amino-acid biosynthesis; L-arginine biosynthesis; L-arginine from L-ornithine and carbamoyl phosphate: step 1/3. In terms of biological role, reversibly catalyzes the transfer of the carbamoyl group from carbamoyl phosphate (CP) to the N(epsilon) atom of ornithine (ORN) to produce L-citrulline. This chain is Ornithine carbamoyltransferase, found in Thermobifida fusca (strain YX).